Consider the following 109-residue polypeptide: Large ribosomal subunit protein uL24 (109 aa).

This sequence belongs to the universal ribosomal protein uL24 family. Part of the 50S ribosomal subunit.

Functionally, one of two assembly initiator proteins, it binds directly to the 5'-end of the 23S rRNA, where it nucleates assembly of the 50S subunit. One of the proteins that surrounds the polypeptide exit tunnel on the outside of the subunit. This is Large ribosomal subunit protein uL24 from Legionella pneumophila (strain Paris).